The sequence spans 384 residues: Beta-lactamase (384 aa).

Residues Met1 to Ala29 form the signal peptide. The active-site Acyl-ester intermediate is the Ser87. The active-site Proton acceptor is the Tyr172. Lys337–Gly339 contacts substrate.

This sequence belongs to the class-C beta-lactamase family.

It is found in the periplasm. The enzyme catalyses a beta-lactam + H2O = a substituted beta-amino acid. This protein is a serine beta-lactamase with a substrate specificity for cephalosporins. This Providencia stuartii protein is Beta-lactamase (ampC).